A 93-amino-acid polypeptide reads, in one-letter code: Cell division topological specificity factor (93 aa).

It belongs to the MinE family.

Its function is as follows. Prevents the cell division inhibition by proteins MinC and MinD at internal division sites while permitting inhibition at polar sites. This ensures cell division at the proper site by restricting the formation of a division septum at the midpoint of the long axis of the cell. In Agathobacter rectalis (strain ATCC 33656 / DSM 3377 / JCM 17463 / KCTC 5835 / VPI 0990) (Eubacterium rectale), this protein is Cell division topological specificity factor.